The sequence spans 320 residues: MEKNIKFPVVDLSKLIGEERDQTMALINDACENWGFFEIVNHGLPHDLMDNAEKMTKEHYKISMEQKFNDMLKSKGLENLEREVEDVDWESTFYLRHLPQSNLYDIPDMSDEYRTAMKDFGKRLENLAEDLLDLLCENLGLEKGYLKKVFHGTKGPTFGTKVSNYPACPKPEMIKGLRAHTDAGGIILLFQDDKVTGLQLLKDGDWIDVPPLNHSIVINLGDQLEVITNGRYKSMMHRVVTQKEGNRMSIASFYNPGSDAEISPASSLACKETEYPSFVFDDYMKLYAGVKFQPKEPRFEAMKNANAVTELNPTAAVETF.

In terms of domain architecture, Fe2OG dioxygenase spans 156–256 (PTFGTKVSNY…RMSIASFYNP (101 aa)). Fe cation-binding residues include His-180, Asp-182, and His-237.

This sequence belongs to the iron/ascorbate-dependent oxidoreductase family. Fe cation is required as a cofactor.

The catalysed reaction is 1-aminocyclopropane-1-carboxylate + L-ascorbate + O2 = ethene + L-dehydroascorbate + hydrogen cyanide + CO2 + 2 H2O. Its pathway is alkene biosynthesis; ethylene biosynthesis via S-adenosyl-L-methionine; ethylene from S-adenosyl-L-methionine: step 2/2. This is 1-aminocyclopropane-1-carboxylate oxidase (ACO) from Brassica juncea (Indian mustard).